A 271-amino-acid polypeptide reads, in one-letter code: 4-hydroxy-tetrahydrodipicolinate reductase (271 aa).

8 to 13 (GITGRM) contributes to the NAD(+) binding site. Arginine 35 provides a ligand contact to NADP(+). Residues 100 to 102 (GST) and 124 to 127 (APNM) each bind NAD(+). Residue histidine 157 is the Proton donor/acceptor of the active site. Histidine 158 contacts (S)-2,3,4,5-tetrahydrodipicolinate. The Proton donor role is filled by lysine 161. Residue 167 to 168 (GT) participates in (S)-2,3,4,5-tetrahydrodipicolinate binding.

Belongs to the DapB family.

The protein resides in the cytoplasm. The catalysed reaction is (S)-2,3,4,5-tetrahydrodipicolinate + NAD(+) + H2O = (2S,4S)-4-hydroxy-2,3,4,5-tetrahydrodipicolinate + NADH + H(+). It catalyses the reaction (S)-2,3,4,5-tetrahydrodipicolinate + NADP(+) + H2O = (2S,4S)-4-hydroxy-2,3,4,5-tetrahydrodipicolinate + NADPH + H(+). Its pathway is amino-acid biosynthesis; L-lysine biosynthesis via DAP pathway; (S)-tetrahydrodipicolinate from L-aspartate: step 4/4. Its function is as follows. Catalyzes the conversion of 4-hydroxy-tetrahydrodipicolinate (HTPA) to tetrahydrodipicolinate. The sequence is that of 4-hydroxy-tetrahydrodipicolinate reductase from Myxococcus xanthus (strain DK1622).